The following is a 180-amino-acid chain: Nascent polypeptide-associated complex subunit alpha (180 aa).

The region spanning 16–80 is the NAC-A/B domain; it reads SKNEKKAREL…AKVDDMNKRI (65 aa). The segment at 81-113 is disordered; the sequence is AEAQQQQAQQDALSKAAGETGEAGEEDKSQDAI. Residues 82-100 are compositionally biased toward low complexity; sequence EAQQQQAQQDALSKAAGET. In terms of domain architecture, UBA spans 142 to 179; the sequence is LDAKDIDIIVEQTQVSRAKAVKALRVHDGDMVNAIMEL.

It belongs to the NAC-alpha family. As to quaternary structure, part of the nascent polypeptide-associated complex (NAC), consisting of EGD2 and EGD1. NAC associates with ribosomes via EGD1.

It is found in the cytoplasm. Its subcellular location is the nucleus. Component of the nascent polypeptide-associated complex (NAC), a dynamic component of the ribosomal exit tunnel, protecting the emerging polypeptides from interaction with other cytoplasmic proteins to ensure appropriate nascent protein targeting. The NAC complex also promotes mitochondrial protein import by enhancing productive ribosome interactions with the outer mitochondrial membrane and blocks the inappropriate interaction of ribosomes translating non-secretory nascent polypeptides with translocation sites in the membrane of the endoplasmic reticulum. EGD2 may also be involved in transcription regulation. The protein is Nascent polypeptide-associated complex subunit alpha (EGD2) of Debaryomyces hansenii (strain ATCC 36239 / CBS 767 / BCRC 21394 / JCM 1990 / NBRC 0083 / IGC 2968) (Yeast).